The chain runs to 117 residues: Aspartate 1-decarboxylase (117 aa).

The active-site Schiff-base intermediate with substrate; via pyruvic acid is the S25. S25 bears the Pyruvic acid (Ser) mark. T57 contacts substrate. The Proton donor role is filled by Y58. Residue 72–74 (GAA) coordinates substrate.

This sequence belongs to the PanD family. As to quaternary structure, heterooctamer of four alpha and four beta subunits. Pyruvate serves as cofactor. In terms of processing, is synthesized initially as an inactive proenzyme, which is activated by self-cleavage at a specific serine bond to produce a beta-subunit with a hydroxyl group at its C-terminus and an alpha-subunit with a pyruvoyl group at its N-terminus.

The protein localises to the cytoplasm. The enzyme catalyses L-aspartate + H(+) = beta-alanine + CO2. Its pathway is cofactor biosynthesis; (R)-pantothenate biosynthesis; beta-alanine from L-aspartate: step 1/1. Functionally, catalyzes the pyruvoyl-dependent decarboxylation of aspartate to produce beta-alanine. In Helicobacter pylori (strain ATCC 700392 / 26695) (Campylobacter pylori), this protein is Aspartate 1-decarboxylase.